Consider the following 206-residue polypeptide: MANVKVYNIEGKEVGSLELNDAIFGVEVNEHLMHMAVVSQLANKRQGTQSAKTRAEVSGGGRKPWRQKGTGHARQGSTRSPQWKGGGVVFAPKPRDYSFKMNRKEKSLAIKSALTSRVEAQKLIVLDSMNMDEIKTKKFKAVLENLKVNKALVVLDKKDENVILSARNIPTVRTATSNAINVYDIVKYDTLVITKDAVAQIEEVYA.

The span at 43 to 52 (NKRQGTQSAK) shows a compositional bias: polar residues. The interval 43–86 (NKRQGTQSAKTRAEVSGGGRKPWRQKGTGHARQGSTRSPQWKGG) is disordered.

This sequence belongs to the universal ribosomal protein uL4 family. In terms of assembly, part of the 50S ribosomal subunit.

One of the primary rRNA binding proteins, this protein initially binds near the 5'-end of the 23S rRNA. It is important during the early stages of 50S assembly. It makes multiple contacts with different domains of the 23S rRNA in the assembled 50S subunit and ribosome. In terms of biological role, forms part of the polypeptide exit tunnel. The polypeptide is Large ribosomal subunit protein uL4 (Lachnoclostridium phytofermentans (strain ATCC 700394 / DSM 18823 / ISDg) (Clostridium phytofermentans)).